The primary structure comprises 719 residues: Ribosomal RNA large subunit methyltransferase K/L (719 aa).

The 112-residue stretch at 43–154 (TQYRVLLWTR…REELVISLDL (112 aa)) folds into the THUMP domain.

The protein belongs to the methyltransferase superfamily. RlmKL family.

The protein resides in the cytoplasm. The catalysed reaction is guanosine(2445) in 23S rRNA + S-adenosyl-L-methionine = N(2)-methylguanosine(2445) in 23S rRNA + S-adenosyl-L-homocysteine + H(+). The enzyme catalyses guanosine(2069) in 23S rRNA + S-adenosyl-L-methionine = N(2)-methylguanosine(2069) in 23S rRNA + S-adenosyl-L-homocysteine + H(+). In terms of biological role, specifically methylates the guanine in position 2445 (m2G2445) and the guanine in position 2069 (m7G2069) of 23S rRNA. This chain is Ribosomal RNA large subunit methyltransferase K/L, found in Pasteurella multocida (strain Pm70).